Reading from the N-terminus, the 977-residue chain is ATP-dependent RNA helicase DBP10 (977 aa).

The tract at residues 1–121 (MGIISKRKRH…NSEKSKHKKG (121 aa)) is disordered. Polar residues predominate over residues 26-35 (ITSNIGLNTA). Positions 37–61 (SSDESESSGDDEEEVQDIVDFSDEE) are enriched in acidic residues. The segment covering 70 to 81 (SNKTLTDNNSFP) has biased composition (polar residues). Residues 121 to 149 (GSFPSFGFSKLILSNVHKKGFRQPTPIQR) carry the Q motif motif. The Helicase ATP-binding domain occupies 152–324 (IPLILQKRDI…KAGLTNPVLV (173 aa)). 165–172 (ARTGSGKT) serves as a coordination point for ATP. The DEAD box signature appears at 272 to 275 (DEAD). 2 disordered regions span residues 377 to 403 (NKSLSDSDSEDEDNKGKQNSRKSKKGK) and 871 to 977 (KTGA…KRKF). A compositionally biased stretch (basic residues) spans 394–403 (QNSRKSKKGK). One can recognise a Helicase C-terminal domain in the interval 403 to 554 (KFQKLKVSAS…SMYEASCKLM (152 aa)). Polar residues predominate over residues 878-894 (SIPTNLLSDPTTDSGSQ). The segment covering 910–921 (RLPDKFRDDYQS) has biased composition (basic and acidic residues). Basic residues predominate over residues 961-977 (KEKKRQKNARPTKKRKF).

It belongs to the DEAD box helicase family. DDX54/DBP10 subfamily.

It localises to the nucleus. Its subcellular location is the nucleolus. The catalysed reaction is ATP + H2O = ADP + phosphate + H(+). Functionally, ATP-binding RNA helicase involved in the biogenesis of 60S ribosomal subunits and is required for the normal formation of 25S and 5.8S rRNAs. The sequence is that of ATP-dependent RNA helicase DBP10 (DBP10) from Vanderwaltozyma polyspora (strain ATCC 22028 / DSM 70294 / BCRC 21397 / CBS 2163 / NBRC 10782 / NRRL Y-8283 / UCD 57-17) (Kluyveromyces polysporus).